The chain runs to 282 residues: Methyltransferase tpcH (282 aa).

The protein belongs to the class I-like SAM-binding methyltransferase superfamily. In terms of tissue distribution, specifically expressed in conidia.

Its pathway is secondary metabolite biosynthesis. Methyltransferase; part of the gene cluster that mediates the biosynthesis of trypacidin, a mycotoxin with antiprotozoal activity and that plays a role in the infection process. The pathway begins with the synthesis of atrochrysone thioester by the polyketide synthase (PKS) tpcC. The atrochrysone carboxyl ACP thioesterase tpcB then breaks the thioester bond and releases the atrochrysone carboxylic acid from tpcC. The decarboxylase tpcK converts atrochrysone carboxylic acid to atrochrysone which is further reduced into emodin anthrone. The next step is performed by the emodin anthrone oxygenase tpcL that catalyzes the oxidation of emodinanthrone to emodin. Emodin O-methyltransferase encoded by tpcA catalyzes methylation of the 8-hydroxy group of emodin to form questin. Ring cleavage of questin by questin oxidase tpcI leads to desmethylsulochrin via several intermediates including questin epoxide. Another methylation step catalyzed by tpcM leads to the formation of sulochrin which is further converted to monomethylsulfochrin by tpcH. Finally, the tpcJ catalyzes the conversion of monomethylsulfochrin to trypacidin. Trypacidin is toxic for human pulmonary and bronchial epithelial cells by initiating the intracellular formation of nitric oxide (NO) and hydrogen peroxide (H(2)O(2)), thus triggering host necrotic cell death. The trypacidin pathway is also able to produce endocrocin via a distinct route from the endocrocin Enc pathway. This Aspergillus fumigatus (strain ATCC MYA-4609 / CBS 101355 / FGSC A1100 / Af293) (Neosartorya fumigata) protein is Methyltransferase tpcH.